The chain runs to 324 residues: PDZ domain-containing protein MAGIX (324 aa).

Residues 1-26 are disordered; that stretch reads MDSRAGNTADPRGGRRGGGLQGSRSP. A PDZ domain is found at 128–212; that stretch reads SVELTRGPAG…HLCLVLQRPQ (85 aa). Basic and acidic residues predominate over residues 216 to 241; the sequence is GSRIKEVGGHRKTDRSLDPRGSRVES. The disordered stretch occupies residues 216–263; it reads GSRIKEVGGHRKTDRSLDPRGSRVESRSTISPVHHRPKTRTSPRPSPE. Phosphoserine is present on S261.

The protein is PDZ domain-containing protein MAGIX (Magix) of Mus musculus (Mouse).